The following is a 118-amino-acid chain: Basic phospholipase A2 CM-III (118 aa).

7 cysteine pairs are disulfide-bonded: cysteine 11/cysteine 70, cysteine 26/cysteine 117, cysteine 28/cysteine 44, cysteine 43/cysteine 98, cysteine 50/cysteine 91, cysteine 59/cysteine 84, and cysteine 77/cysteine 89. Residues tyrosine 27, glycine 29, and glycine 31 each contribute to the Ca(2+) site. Histidine 47 is an active-site residue. Aspartate 48 contributes to the Ca(2+) binding site. A Coagulation factor Xa binding motif motif is present at residues glutamate 52–lysine 69. Aspartate 92 is a catalytic residue.

This sequence belongs to the phospholipase A2 family. Group I subfamily. D49 sub-subfamily. It depends on Ca(2+) as a cofactor. As to expression, expressed by the venom gland.

It is found in the secreted. The enzyme catalyses a 1,2-diacyl-sn-glycero-3-phosphocholine + H2O = a 1-acyl-sn-glycero-3-phosphocholine + a fatty acid + H(+). Snake venom phospholipase A2 (PLA2) that shows several activities. It shows strong anticoagulant activity, probably by binding to coagulation factor Xa (F10) and inhibiting the formation of the prothrombinase complex, shows direct hemolytic action, causes neuromuscular blockade with a gradual contracture and a decreased sensitivity to ACh and KCl, abolishes twitches evoked by indirect stimulation earlier than those by direct stimulation (in the mouse phrenic nerve-diaphragm preparation), and causes myonecrosis when injected intramuscularly. PLA2 catalyzes the calcium-dependent hydrolysis of the 2-acyl groups in 3-sn-phosphoglycerides. This is Basic phospholipase A2 CM-III from Naja mossambica (Mozambique spitting cobra).